The sequence spans 503 residues: Lysine--tRNA ligase (503 aa).

Mg(2+) contacts are provided by glutamate 412 and glutamate 419.

The protein belongs to the class-II aminoacyl-tRNA synthetase family. As to quaternary structure, homodimer. Mg(2+) is required as a cofactor.

The protein localises to the cytoplasm. The enzyme catalyses tRNA(Lys) + L-lysine + ATP = L-lysyl-tRNA(Lys) + AMP + diphosphate. This Idiomarina loihiensis (strain ATCC BAA-735 / DSM 15497 / L2-TR) protein is Lysine--tRNA ligase.